The following is a 562-amino-acid chain: Dihydroxy-acid dehydratase (562 aa).

Aspartate 80 contacts Mg(2+). A [2Fe-2S] cluster-binding site is contributed by cysteine 121. Mg(2+)-binding residues include aspartate 122 and lysine 123. At lysine 123 the chain carries N6-carboxylysine. [2Fe-2S] cluster is bound at residue cysteine 194. Residue glutamate 446 coordinates Mg(2+). Serine 472 serves as the catalytic Proton acceptor.

It belongs to the IlvD/Edd family. In terms of assembly, homodimer. [2Fe-2S] cluster serves as cofactor. Mg(2+) is required as a cofactor.

The enzyme catalyses (2R)-2,3-dihydroxy-3-methylbutanoate = 3-methyl-2-oxobutanoate + H2O. The catalysed reaction is (2R,3R)-2,3-dihydroxy-3-methylpentanoate = (S)-3-methyl-2-oxopentanoate + H2O. It functions in the pathway amino-acid biosynthesis; L-isoleucine biosynthesis; L-isoleucine from 2-oxobutanoate: step 3/4. It participates in amino-acid biosynthesis; L-valine biosynthesis; L-valine from pyruvate: step 3/4. In terms of biological role, functions in the biosynthesis of branched-chain amino acids. Catalyzes the dehydration of (2R,3R)-2,3-dihydroxy-3-methylpentanoate (2,3-dihydroxy-3-methylvalerate) into 2-oxo-3-methylpentanoate (2-oxo-3-methylvalerate) and of (2R)-2,3-dihydroxy-3-methylbutanoate (2,3-dihydroxyisovalerate) into 2-oxo-3-methylbutanoate (2-oxoisovalerate), the penultimate precursor to L-isoleucine and L-valine, respectively. The chain is Dihydroxy-acid dehydratase from Staphylococcus aureus (strain COL).